We begin with the raw amino-acid sequence, 473 residues long: Photosystem II CP43 reaction center protein (473 aa).

Positions 1–14 (MKTLYSLRRFYPVE) are excised as a propeptide. An N-acetylthreonine modification is found at Thr15. The residue at position 15 (Thr15) is a Phosphothreonine. The next 5 helical transmembrane spans lie at 69-93 (LFEV…PHLA), 134-155 (LLGP…KDRN), 178-200 (KALY…RKIT), 255-275 (KPFA…LSYS), and 291-312 (WFNN…ASQA). Glu367 contacts [CaMn4O5] cluster. Residues 447 to 471 (RARAAAAGFEKGIDRDFEPVLSMTP) form a helical membrane-spanning segment.

This sequence belongs to the PsbB/PsbC family. PsbC subfamily. PSII is composed of 1 copy each of membrane proteins PsbA, PsbB, PsbC, PsbD, PsbE, PsbF, PsbH, PsbI, PsbJ, PsbK, PsbL, PsbM, PsbT, PsbX, PsbY, PsbZ, Psb30/Ycf12, at least 3 peripheral proteins of the oxygen-evolving complex and a large number of cofactors. It forms dimeric complexes. It depends on Binds multiple chlorophylls and provides some of the ligands for the Ca-4Mn-5O cluster of the oxygen-evolving complex. It may also provide a ligand for a Cl- that is required for oxygen evolution. PSII binds additional chlorophylls, carotenoids and specific lipids. as a cofactor.

The protein resides in the plastid. It is found in the chloroplast thylakoid membrane. Its function is as follows. One of the components of the core complex of photosystem II (PSII). It binds chlorophyll and helps catalyze the primary light-induced photochemical processes of PSII. PSII is a light-driven water:plastoquinone oxidoreductase, using light energy to abstract electrons from H(2)O, generating O(2) and a proton gradient subsequently used for ATP formation. This is Photosystem II CP43 reaction center protein from Buxus microphylla (Littleleaf boxwood).